A 293-amino-acid chain; its full sequence is Methylsterol monooxygenase 1 (293 aa).

The next 2 helical transmembrane spans lie at 55-75 (LIVH…FQFI) and 100-120 (KILF…YYFT). In terms of domain architecture, Fatty acid hydroxylase spans 144–274 (GCAVIEDTWH…FTWWDKLFGT (131 aa)). The short motif at 157 to 161 (HRLLH) is the Histidine box-1 element. A Histidine box-2 motif is present at residues 170–174 (HKVHH). Residues 199 to 219 (FFIGIVLLCDHVILLWAWVTI) form a helical membrane-spanning segment. The Histidine box-3 signature appears at 249 to 255 (HHDFHHM).

The protein belongs to the sterol desaturase family. Requires Fe cation as cofactor. Post-translationally, ubiquitinated by MARCHF6, leading to proteasomal degradation.

The protein localises to the endoplasmic reticulum membrane. It catalyses the reaction 4,4-dimethyl-5alpha-cholest-7-en-3beta-ol + 6 Fe(II)-[cytochrome b5] + 3 O2 + 5 H(+) = 4alpha-carboxy-4beta-methyl-5alpha-cholest-7-ene-3beta-ol + 6 Fe(III)-[cytochrome b5] + 4 H2O. It carries out the reaction 4,4-dimethyl-5alpha-cholesta-8,24-dien-3beta-ol + 6 Fe(II)-[cytochrome b5] + 3 O2 + 5 H(+) = 4beta-methylzymosterol-4alpha-carboxylate + 6 Fe(III)-[cytochrome b5] + 4 H2O. The enzyme catalyses 4alpha-methylzymosterol + 6 Fe(II)-[cytochrome b5] + 3 O2 + 5 H(+) = 4alpha-carboxyzymosterol + 6 Fe(III)-[cytochrome b5] + 4 H2O. The catalysed reaction is 4alpha-methyl-5alpha-cholest-7-en-3beta-ol + 6 Fe(II)-[cytochrome b5] + 3 O2 + 5 H(+) = 4alpha-carboxy-5alpha-cholest-7-en-3beta-ol + 6 Fe(III)-[cytochrome b5] + 4 H2O. It catalyses the reaction 4,4-dimethyl-5alpha-cholest-8-en-3beta-ol + 6 Fe(II)-[cytochrome b5] + 3 O2 + 5 H(+) = 4alpha-carboxy-4beta-methyl-5alpha-cholest-8-en-3beta-ol + 6 Fe(III)-[cytochrome b5] + 4 H2O. It carries out the reaction 4alpha-methyl-5alpha-cholest-8-en-3beta-ol + 6 Fe(II)-[cytochrome b5] + 3 O2 + 5 H(+) = 4alpha-carboxy-5alpha-cholest-8-ene-3beta-ol + 6 Fe(III)-[cytochrome b5] + 4 H2O. It functions in the pathway steroid biosynthesis; zymosterol biosynthesis; zymosterol from lanosterol: step 3/6. Its pathway is steroid biosynthesis; cholesterol biosynthesis. Catalyzes the three-step monooxygenation required for the demethylation of 4,4-dimethyl and 4alpha-methylsterols, which can be subsequently metabolized to cholesterol. The protein is Methylsterol monooxygenase 1 (Msmo1) of Mus musculus (Mouse).